Reading from the N-terminus, the 234-residue chain is Nuclear transcription factor Y subunit C-1 (234 aa).

2 disordered regions span residues 1–20 (MDTNNQQPPPSAAGIPPPPP) and 205–234 (SVWQTSTGTGDDVSYGSGGSSGQGNLDGQG). Residues 7–20 (QPPPSAAGIPPPPP) show a composition bias toward pro residues. The span at 209 to 219 (TSTGTGDDVSY) shows a compositional bias: low complexity. A compositionally biased stretch (gly residues) spans 220–234 (GSGGSSGQGNLDGQG).

The protein belongs to the NFYC/HAP5 subunit family. As to quaternary structure, heterotrimeric transcription factor composed of three components, NF-YA, NF-YB and NF-YC. NF-YB and NF-YC must interact and dimerize for NF-YA association and DNA binding. Ubiquitous. Present in etiolated seedlings.

The protein localises to the nucleus. In terms of biological role, stimulates the transcription of various genes by recognizing and binding to a CCAAT motif in promoters. This Arabidopsis thaliana (Mouse-ear cress) protein is Nuclear transcription factor Y subunit C-1 (NFYC1).